Here is a 107-residue protein sequence, read N- to C-terminus: NADH-quinone oxidoreductase subunit K (107 aa).

The next 3 helical transmembrane spans lie at 9 to 29 (IGVN…MFAV), 36 to 56 (IVIL…FLTF), and 68 to 88 (FSLF…AIVI).

This sequence belongs to the complex I subunit 4L family. As to quaternary structure, NDH-1 is composed of 14 different subunits. Subunits NuoA, H, J, K, L, M, N constitute the membrane sector of the complex.

The protein resides in the cell inner membrane. The enzyme catalyses a quinone + NADH + 5 H(+)(in) = a quinol + NAD(+) + 4 H(+)(out). In terms of biological role, NDH-1 shuttles electrons from NADH, via FMN and iron-sulfur (Fe-S) centers, to quinones in the respiratory chain. The immediate electron acceptor for the enzyme in this species is believed to be a menaquinone. Couples the redox reaction to proton translocation (for every two electrons transferred, four hydrogen ions are translocated across the cytoplasmic membrane), and thus conserves the redox energy in a proton gradient. The polypeptide is NADH-quinone oxidoreductase subunit K (Chlorobaculum tepidum (strain ATCC 49652 / DSM 12025 / NBRC 103806 / TLS) (Chlorobium tepidum)).